Here is a 93-residue protein sequence, read N- to C-terminus: UPF0728 protein C10orf53 (93 aa).

The protein belongs to the UPF0728 family.

This chain is UPF0728 protein C10orf53 (C10orf53), found in Homo sapiens (Human).